The sequence spans 234 residues: 7-cyano-7-deazaguanine synthase (234 aa).

Residue 8–18 (FSGGQDSTTCA) coordinates ATP. Residues cysteine 194, cysteine 202, cysteine 205, and cysteine 208 each coordinate Zn(2+).

This sequence belongs to the QueC family. Zn(2+) serves as cofactor.

The catalysed reaction is 7-carboxy-7-deazaguanine + NH4(+) + ATP = 7-cyano-7-deazaguanine + ADP + phosphate + H2O + H(+). It participates in purine metabolism; 7-cyano-7-deazaguanine biosynthesis. Its function is as follows. Catalyzes the ATP-dependent conversion of 7-carboxy-7-deazaguanine (CDG) to 7-cyano-7-deazaguanine (preQ(0)). This is 7-cyano-7-deazaguanine synthase from Gloeobacter violaceus (strain ATCC 29082 / PCC 7421).